The chain runs to 69 residues: Conotoxin Lp3.1 (69 aa).

Residues 1–20 (MLKMGVLLFIFLVLFPLTTL) form the signal peptide. A propeptide spanning residues 21–54 (ELDTDRPVERHAAIKQDLKPQERRGIRLHAPRDE) is cleaved from the precursor. Intrachain disulfides connect C55-C67, C56-C65, and C61-C68.

It belongs to the conotoxin M superfamily. In terms of tissue distribution, expressed by the venom duct.

The protein localises to the secreted. This is Conotoxin Lp3.1 from Conus leopardus (Leopard cone).